The primary structure comprises 388 residues: Succinate--CoA ligase [ADP-forming] subunit beta (388 aa).

The region spanning 9–244 (KSLFAEYGLP…PSQDDAREAH (236 aa)) is the ATP-grasp domain. ATP is bound by residues lysine 46, 53–55 (GRG), glutamate 99, threonine 102, and glutamate 107. Mg(2+) is bound by residues asparagine 199 and aspartate 213. Substrate-binding positions include asparagine 264 and 321–323 (GIV).

The protein belongs to the succinate/malate CoA ligase beta subunit family. As to quaternary structure, heterotetramer of two alpha and two beta subunits. Mg(2+) is required as a cofactor.

The catalysed reaction is succinate + ATP + CoA = succinyl-CoA + ADP + phosphate. It catalyses the reaction GTP + succinate + CoA = succinyl-CoA + GDP + phosphate. It functions in the pathway carbohydrate metabolism; tricarboxylic acid cycle; succinate from succinyl-CoA (ligase route): step 1/1. Succinyl-CoA synthetase functions in the citric acid cycle (TCA), coupling the hydrolysis of succinyl-CoA to the synthesis of either ATP or GTP and thus represents the only step of substrate-level phosphorylation in the TCA. The beta subunit provides nucleotide specificity of the enzyme and binds the substrate succinate, while the binding sites for coenzyme A and phosphate are found in the alpha subunit. The chain is Succinate--CoA ligase [ADP-forming] subunit beta from Shewanella frigidimarina (strain NCIMB 400).